The sequence spans 140 residues: Lysozyme D (140 aa).

The first 18 residues, 1 to 18 (MKAFIVLVALACAAPAFG), serve as a signal peptide directing secretion. In terms of domain architecture, C-type lysozyme spans 19-140 (RTMDRCSLAR…GWLPSIDDCF (122 aa)). 4 cysteine pairs are disulfide-bonded: Cys24–Cys139, Cys45–Cys129, Cys80–Cys96, and Cys92–Cys110. Catalysis depends on residues Glu50 and Asp68.

It belongs to the glycosyl hydrolase 22 family. In terms of tissue distribution, found in the midgut.

It carries out the reaction Hydrolysis of (1-&gt;4)-beta-linkages between N-acetylmuramic acid and N-acetyl-D-glucosamine residues in a peptidoglycan and between N-acetyl-D-glucosamine residues in chitodextrins.. In terms of biological role, unlikely to play an active role in the humoral immune defense. May have a function in the digestion of bacteria in the food. The chain is Lysozyme D (LysD) from Drosophila melanogaster (Fruit fly).